A 277-amino-acid polypeptide reads, in one-letter code: MQRKSNFRDVFYVSDGTAITSETLGHAVLGQFPIEIHQTTHPFIETNERAKQVKTLVNQSHEKTGIKPLVFYSIVIPDVKVIIEQSNAHFYDVLNVLVEPLKHDLQLEPEPQLQRSHSINKDAASYQDRIAAIEYTLAHDDGISLNNLDQADVILLGVSRCGKTPTSLYLAMQFGIRAVNYPFIAEDMASLKLPAAIEPYRFKTYGLTIDIERLVAIRNERYANSDYASLEQCEKELHKVEGMFRREAIPYLNTSSLSVEEIATRLLDISGLKRKMC.

Residue glycine 157–threonine 164 coordinates ADP.

This sequence belongs to the pyruvate, phosphate/water dikinase regulatory protein family. PSRP subfamily.

It catalyses the reaction [pyruvate, water dikinase] + ADP = [pyruvate, water dikinase]-phosphate + AMP + H(+). The enzyme catalyses [pyruvate, water dikinase]-phosphate + phosphate + H(+) = [pyruvate, water dikinase] + diphosphate. In terms of biological role, bifunctional serine/threonine kinase and phosphorylase involved in the regulation of the phosphoenolpyruvate synthase (PEPS) by catalyzing its phosphorylation/dephosphorylation. The polypeptide is Putative phosphoenolpyruvate synthase regulatory protein (Photobacterium profundum (strain SS9)).